A 232-amino-acid polypeptide reads, in one-letter code: Putative membrane protein ORF8 (232 aa).

The span at 71 to 84 shows a compositional bias: low complexity; that stretch reads GSSAASIPSAPTPD. The interval 71–121 is disordered; that stretch reads GSSAASIPSAPTPDATRESPTGEPHRDRALSTETPTPEPSRDGGSTPEVLH. 2 consecutive transmembrane segments (helical) span residues 166–182 and 195–211; these read VFARALAAAEIAIGSVA and LVVTSLVFAGVALWVIV.

The protein resides in the membrane. The polypeptide is Putative membrane protein ORF8 (ORF8) (Ictalurid herpesvirus 1 (strain Auburn) (IcHV-1)).